We begin with the raw amino-acid sequence, 314 residues long: Homoserine kinase (314 aa).

Residue 96-106 (PIGSGLGSSAC) coordinates ATP.

It belongs to the GHMP kinase family. Homoserine kinase subfamily.

The protein localises to the cytoplasm. The catalysed reaction is L-homoserine + ATP = O-phospho-L-homoserine + ADP + H(+). It participates in amino-acid biosynthesis; L-threonine biosynthesis; L-threonine from L-aspartate: step 4/5. Catalyzes the ATP-dependent phosphorylation of L-homoserine to L-homoserine phosphate. This is Homoserine kinase from Haemophilus influenzae (strain 86-028NP).